The sequence spans 201 residues: Recombination protein RecR (201 aa).

The segment at 60 to 75 (CSCCGNVDTSDPCTIC) adopts a C4-type zinc-finger fold. A Toprim domain is found at 83-178 (ATLIVVEDVS…RVTRLAHGVP (96 aa)).

The protein belongs to the RecR family.

May play a role in DNA repair. It seems to be involved in an RecBC-independent recombinational process of DNA repair. It may act with RecF and RecO. This chain is Recombination protein RecR, found in Brucella abortus biovar 1 (strain 9-941).